The chain runs to 624 residues: Chaperone protein HtpG (624 aa).

The segment at 1–336 (MKGQETRGFQ…SNDLPLNVSR (336 aa)) is a; substrate-binding. The interval 337–552 (EILQDSTVTR…ADEMSTQMAK (216 aa)) is b. The segment at 553–624 (LFAAAGQSVP…IRRMNQLLVS (72 aa)) is c.

It belongs to the heat shock protein 90 family. In terms of assembly, homodimer.

It is found in the cytoplasm. Functionally, molecular chaperone. Has ATPase activity. The sequence is that of Chaperone protein HtpG from Salmonella paratyphi A (strain ATCC 9150 / SARB42).